A 214-amino-acid polypeptide reads, in one-letter code: Ceramide-1-phosphate transfer protein (214 aa).

Residues Asp56, Lys60, Arg106, Arg110, and His150 each contribute to the an N-acylsphingoid base 1-phosphate site.

It belongs to the GLTP family.

Its subcellular location is the cytoplasm. The protein resides in the cytosol. It localises to the golgi apparatus. The protein localises to the trans-Golgi network membrane. It is found in the cell membrane. Its subcellular location is the endosome membrane. The protein resides in the nucleus outer membrane. The catalysed reaction is N-(hexadecanoyl)-sphing-4-enine-1-phosphate(in) = N-(hexadecanoyl)-sphing-4-enine-1-phosphate(out). It catalyses the reaction N-(9Z-octadecenoyl)-sphing-4-enine-1-phosphate(in) = N-(9Z-octadecenoyl)-sphing-4-enine-1-phosphate(out). Its function is as follows. Mediates the intracellular transfer of ceramide-1-phosphate (C1P) between organelle membranes and the cell membrane. Required for normal structure of the Golgi stacks. Can bind phosphoceramides with a variety of aliphatic chains, but has a preference for lipids with saturated C16:0 or monounsaturated C18:1 aliphatic chains, and is inefficient with phosphoceramides containing lignoceryl (C24:0). Plays a role in the regulation of the cellular levels of ceramide-1-phosphate, and thereby contributes to the regulation of phospholipase PLA2G4A activity and the release of arachidonic acid. Has no activity with galactosylceramide, lactosylceramide, sphingomyelin, phosphatidylcholine, phosphatidic acid and ceramide. C1P transfer is stimulated by phosphatidylserine in C1P source vesicles. Regulates autophagy, inflammasome mediated IL1B and IL18 processing, and pyroptosis, but not apoptosis. This is Ceramide-1-phosphate transfer protein (CPTP) from Bos taurus (Bovine).